The following is a 266-amino-acid chain: Carboxy-S-adenosyl-L-methionine synthase (266 aa).

The tract at residues 1–24 is disordered; sequence MPKRETQSLHDTQQQPGPTAPQRD. S-adenosyl-L-methionine contacts are provided by residues Tyr-58, 83 to 85, 108 to 109, 136 to 137, Asn-151, and Arg-218; these read GCS, DN, and DI.

This sequence belongs to the class I-like SAM-binding methyltransferase superfamily. Cx-SAM synthase family. Homodimer.

It catalyses the reaction prephenate + S-adenosyl-L-methionine = carboxy-S-adenosyl-L-methionine + 3-phenylpyruvate + H2O. Functionally, catalyzes the conversion of S-adenosyl-L-methionine (SAM) to carboxy-S-adenosyl-L-methionine (Cx-SAM). In Yersinia enterocolitica serotype O:8 / biotype 1B (strain NCTC 13174 / 8081), this protein is Carboxy-S-adenosyl-L-methionine synthase.